We begin with the raw amino-acid sequence, 405 residues long: Diaminopimelate decarboxylase (405 aa).

Lys-46 is subject to N6-(pyridoxal phosphate)lysine. Pyridoxal 5'-phosphate is bound by residues Gly-225 and 259-262; that span reads EPGR. Substrate-binding residues include Arg-262, Arg-298, and Tyr-302. Cys-329 functions as the Proton donor in the catalytic mechanism. Residues Glu-330 and Tyr-358 each coordinate substrate. Tyr-358 contacts pyridoxal 5'-phosphate.

Belongs to the Orn/Lys/Arg decarboxylase class-II family. LysA subfamily. Homodimer. Requires pyridoxal 5'-phosphate as cofactor.

It catalyses the reaction meso-2,6-diaminopimelate + H(+) = L-lysine + CO2. The protein operates within amino-acid biosynthesis; L-lysine biosynthesis via DAP pathway; L-lysine from DL-2,6-diaminopimelate: step 1/1. In terms of biological role, specifically catalyzes the decarboxylation of meso-diaminopimelate (meso-DAP) to L-lysine. The protein is Diaminopimelate decarboxylase of Helicobacter pylori (Campylobacter pylori).